Here is a 124-residue protein sequence, read N- to C-terminus: RNA polymerase-binding protein RbpA (124 aa).

Zn(2+)-binding residues include Cys34, His38, Cys56, and Cys59. Residues 73-124 are sufficient for interaction with HrdB (SigA); sequence EKKAKPARTHWDMLMERRTREELEEVLEERLAVLRSGAMNIAVHPRDSRKSA.

The protein belongs to the RNA polymerase-binding protein RbpA family. In terms of assembly, homodimer. Forms a complex with the RNAP, and a complex with RNAP plus principal sigma factor HrdB associated with promoter. Binds to free principal sigma factors HrdB and HrdA, probably via the sigma-2 domain, but not to 6 other sigma factors tested. It depends on Zn(2+) as a cofactor.

Binds to RNA polymerase (RNAP), stimulating transcription from principal, but not alternative sigma factor promoters. Stimulates transcription from several principal sigma factor HrdB (SigA)-dependent promoters but not from a SigR-dependent promoter. Stimulation occurs in the presence of the transcription initiation inhibitor rifampicin (Rif). The protein is RNA polymerase-binding protein RbpA of Streptomyces coelicolor (strain ATCC BAA-471 / A3(2) / M145).